The primary structure comprises 458 residues: UDP-N-acetylmuramate--L-alanine ligase (458 aa).

112–118 (GTHGKTT) is a binding site for ATP.

It belongs to the MurCDEF family.

The protein resides in the cytoplasm. The catalysed reaction is UDP-N-acetyl-alpha-D-muramate + L-alanine + ATP = UDP-N-acetyl-alpha-D-muramoyl-L-alanine + ADP + phosphate + H(+). Its pathway is cell wall biogenesis; peptidoglycan biosynthesis. In terms of biological role, cell wall formation. This Geotalea uraniireducens (strain Rf4) (Geobacter uraniireducens) protein is UDP-N-acetylmuramate--L-alanine ligase.